The chain runs to 300 residues: uncharacterized protein (300 aa).

The segment covering 1–11 has biased composition (polar residues); sequence MYNEGVTSPSQ. A disordered region spans residues 1 to 20; the sequence is MYNEGVTSPSQLARKKNATD. The segment at residues 1–92 is a DNA-binding region (recombinase); that stretch reads MYNEGVTSPS…QEILITRKRR (92 aa). Residues 162–249 are a coiled coil; that stretch reads SKENYFKELS…DLEFQKIEKE (88 aa).

This is an uncharacterized protein from Bacillus subtilis (strain 168).